The sequence spans 147 residues: Ribosome-binding factor A (147 aa).

Residues L123–D147 are disordered.

The protein belongs to the RbfA family. In terms of assembly, monomer. Binds 30S ribosomal subunits, but not 50S ribosomal subunits or 70S ribosomes.

It is found in the cytoplasm. In terms of biological role, one of several proteins that assist in the late maturation steps of the functional core of the 30S ribosomal subunit. Associates with free 30S ribosomal subunits (but not with 30S subunits that are part of 70S ribosomes or polysomes). Required for efficient processing of 16S rRNA. May interact with the 5'-terminal helix region of 16S rRNA. The chain is Ribosome-binding factor A from Corynebacterium aurimucosum (strain ATCC 700975 / DSM 44827 / CIP 107346 / CN-1) (Corynebacterium nigricans).